The sequence spans 300 residues: Very-long-chain enoyl-CoA reductase (300 aa).

Residues 91-111 form a helical membrane-spanning segment; that stretch reads SLVFICEYAGPLFVYPIFYFL. Asn-163 is a glycosylation site (N-linked (GlcNAc...) asparagine). A helical membrane pass occupies residues 191–211; the sequence is VYLGLGLWIIGEVFNYICHIQ. An N-linked (GlcNAc...) asparagine glycan is attached at Asn-238. Residues 243–263 form a helical membrane-spanning segment; sequence ILSWIGFSILTQTLTSWIFAL.

This sequence belongs to the steroid 5-alpha reductase family.

The protein resides in the endoplasmic reticulum membrane. It catalyses the reaction a very-long-chain 2,3-saturated fatty acyl-CoA + NADP(+) = a very-long-chain (2E)-enoyl-CoA + NADPH + H(+). The protein operates within lipid metabolism; fatty acid biosynthesis. Functionally, catalyzes the last of the four reactions of the long-chain fatty acids elongation cycle. This endoplasmic reticulum-bound enzymatic process, allows the addition of 2 carbons to the chain of long- and very long-chain fatty acids/VLCFAs per cycle. This enzyme reduces the trans-2,3-enoyl-CoA fatty acid intermediate to an acyl-CoA that can be further elongated by entering a new cycle of elongation. Thereby, it participates in the production of VLCFAs of different chain lengths that are involved in multiple biological processes as precursors of membrane lipids and lipid mediators. This chain is Very-long-chain enoyl-CoA reductase (gpsn2), found in Dictyostelium discoideum (Social amoeba).